The sequence spans 187 residues: Methylamine dehydrogenase light chain (187 aa).

Residues Met-1–Gln-57 constitute a signal peptide (tat-type signal). 6 disulfide bridges follow: Cys-79/Cys-144, Cys-85/Cys-117, Cys-92/Cys-177, Cys-94/Cys-142, Cys-102/Cys-133, and Cys-134/Cys-165. Position 113 is a tryptophylquinone (Trp-113). Residues Trp-113–Trp-164 constitute a cross-link (tryptophan tryptophylquinone (Trp-Trp)).

This sequence belongs to the aromatic amine dehydrogenase light chain family. In terms of assembly, heterotetramer of two light and two heavy chains. Tryptophan tryptophylquinone residue is required as a cofactor. Predicted to be exported by the Tat system. The position of the signal peptide cleavage has not been experimentally proven. Post-translationally, tryptophan tryptophylquinone (TTQ) is formed by oxidation of the indole ring of a tryptophan to form tryptophylquinone followed by covalent cross-linking with another tryptophan residue.

It localises to the periplasm. The enzyme catalyses 2 oxidized [amicyanin] + methylamine + H2O = 2 reduced [amicyanin] + formaldehyde + NH4(+) + 2 H(+). It functions in the pathway one-carbon metabolism; methylamine degradation; formaldehyde from methylamine: step 1/1. Its function is as follows. Methylamine dehydrogenase carries out the oxidation of methylamine. Electrons are passed from methylamine dehydrogenase to amicyanin. In Methylophilus methylotrophus (Bacterium W3A1), this protein is Methylamine dehydrogenase light chain (mauA).